The sequence spans 489 residues: Betaine aldehyde dehydrogenase (489 aa).

The K(+) site is built by Thr-26 and Asp-93. 150–152 (GAW) is a binding site for NAD(+). Lys-162 serves as the catalytic Charge relay system. Residue 176-179 (KPSE) participates in NAD(+) binding. Val-180 serves as a coordination point for K(+). 229–232 (GVET) is a binding site for NAD(+). Leu-245 is a K(+) binding site. Glu-251 acts as the Proton acceptor in catalysis. NAD(+)-binding residues include Gly-253, Cys-285, and Glu-386. Cys-285 acts as the Nucleophile in catalysis. Cys-285 carries the cysteine sulfenic acid (-SOH) modification. K(+) contacts are provided by Lys-456 and Gly-459. Glu-463 acts as the Charge relay system in catalysis.

Belongs to the aldehyde dehydrogenase family. In terms of assembly, dimer of dimers. K(+) serves as cofactor.

The catalysed reaction is betaine aldehyde + NAD(+) + H2O = glycine betaine + NADH + 2 H(+). It functions in the pathway amine and polyamine biosynthesis; betaine biosynthesis via choline pathway; betaine from betaine aldehyde: step 1/1. Functionally, involved in the biosynthesis of the osmoprotectant glycine betaine. Catalyzes the irreversible oxidation of betaine aldehyde to the corresponding acid. The chain is Betaine aldehyde dehydrogenase from Burkholderia pseudomallei (strain 668).